We begin with the raw amino-acid sequence, 192 residues long: Xanthine phosphoribosyltransferase (192 aa).

Xanthine is bound by residues L20 and N27. 128-132 serves as a coordination point for 5-phospho-alpha-D-ribose 1-diphosphate; the sequence is ANGQA. K156 lines the xanthine pocket.

Belongs to the purine/pyrimidine phosphoribosyltransferase family. Xpt subfamily. Homodimer.

It localises to the cytoplasm. The enzyme catalyses XMP + diphosphate = xanthine + 5-phospho-alpha-D-ribose 1-diphosphate. It functions in the pathway purine metabolism; XMP biosynthesis via salvage pathway; XMP from xanthine: step 1/1. Its function is as follows. Converts the preformed base xanthine, a product of nucleic acid breakdown, to xanthosine 5'-monophosphate (XMP), so it can be reused for RNA or DNA synthesis. This is Xanthine phosphoribosyltransferase from Listeria monocytogenes serotype 4b (strain F2365).